Here is a 1028-residue protein sequence, read N- to C-terminus: Antigenic heat-stable 120 kDa protein (1028 aa).

2 stretches are compositionally biased toward polar residues: residues 359–384 (GQSK…QYKQ) and 391–400 (PTNQPLQPET). The segment at 359 to 405 (GQSKEQPLITPQQTTSSSVEPPQYKQQVPPITPTNQPLQPETSQMQQ) is disordered.

It is found in the cytoplasm. This is Antigenic heat-stable 120 kDa protein (sca4) from Rickettsia africae.